Consider the following 342-residue polypeptide: Ornithine carbamoyltransferase, catabolic (342 aa).

Residues 59–62 (STRT), S83, R110, and 137–140 (HPTQ) contribute to the carbamoyl phosphate site. L-ornithine-binding positions include N169, D235, and 239-240 (SL). Carbamoyl phosphate is bound by residues 276–277 (CL) and R328.

This sequence belongs to the aspartate/ornithine carbamoyltransferase superfamily. OTCase family. Dodecamer (tetramer of trimers).

Its subcellular location is the cytoplasm. It carries out the reaction carbamoyl phosphate + L-ornithine = L-citrulline + phosphate + H(+). The protein operates within amino-acid degradation; L-arginine degradation via ADI pathway; carbamoyl phosphate from L-arginine: step 2/2. Its function is as follows. nvolved in the catabolism of arginine. Catalyzes the phosphorolysis of citrulline, the reverse reaction of the biosynthetic one, yielding ornithine and carbamoyl phosphate which serve to generate ATP from ADP. The protein is Ornithine carbamoyltransferase, catabolic (arcB) of Malacoplasma penetrans (strain HF-2) (Mycoplasma penetrans).